The following is a 259-amino-acid chain: tRNA pseudouridine synthase A (259 aa).

D52 functions as the Nucleophile in the catalytic mechanism. Position 111 (Y111) interacts with substrate.

Belongs to the tRNA pseudouridine synthase TruA family. Homodimer.

It catalyses the reaction uridine(38/39/40) in tRNA = pseudouridine(38/39/40) in tRNA. Its function is as follows. Formation of pseudouridine at positions 38, 39 and 40 in the anticodon stem and loop of transfer RNAs. The sequence is that of tRNA pseudouridine synthase A from Ruegeria sp. (strain TM1040) (Silicibacter sp.).